Here is a 191-residue protein sequence, read N- to C-terminus: Fe/S biogenesis protein NfuA (191 aa).

Residues C149 and C152 each contribute to the [4Fe-4S] cluster site.

It belongs to the NfuA family. Homodimer. The cofactor is [4Fe-4S] cluster.

In terms of biological role, involved in iron-sulfur cluster biogenesis. Binds a 4Fe-4S cluster, can transfer this cluster to apoproteins, and thereby intervenes in the maturation of Fe/S proteins. Could also act as a scaffold/chaperone for damaged Fe/S proteins. The protein is Fe/S biogenesis protein NfuA of Salmonella paratyphi A (strain ATCC 9150 / SARB42).